The sequence spans 495 residues: Syntaphilin (495 aa).

The tract at residues 1 to 74 (MAMSLQGSRR…HGIKPPTPEQ (74 aa)) is disordered. The span at 7–49 (GSRRASAGSRRRTSPPVSVRDAYGTSSLSSSSNSGSCKGSDSS) shows a compositional bias: low complexity. The stretch at 79-161 (LQQKEVCIRH…VKNNLIDKDK (83 aa)) forms a coiled coil. The disordered stretch occupies residues 191–244 (VAKEEGTGESAGGSPARSLTRSSTYTKLSDPAVCGDRQPGDPSNTSAEDGADSG). Ser-200 and Ser-204 each carry phosphoserine. Residues 207–217 (RSLTRSSTYTK) are compositionally biased toward polar residues. At Thr-214 the chain carries Phosphothreonine. Phosphoserine is present on Ser-219. Thr-235 carries the post-translational modification Phosphothreonine. A helical transmembrane segment spans residues 427-446 (YIVDLLAVVVPAVPTVAWLC).

Binds to STX1A. Interacts with DNM1; this interaction inhibits the binding of DNM1 to AMPH and DNM1-receptor-mediated endocytosis.

It is found in the membrane. The protein localises to the synapse. Its subcellular location is the synaptosome. Inhibits SNARE complex formation by absorbing free STX1A. This is Syntaphilin from Mus musculus (Mouse).